Here is a 96-residue protein sequence, read N- to C-terminus: Co-chaperonin GroES (96 aa).

The protein belongs to the GroES chaperonin family. As to quaternary structure, heptamer of 7 subunits arranged in a ring. Interacts with the chaperonin GroEL.

It is found in the cytoplasm. Functionally, together with the chaperonin GroEL, plays an essential role in assisting protein folding. The GroEL-GroES system forms a nano-cage that allows encapsulation of the non-native substrate proteins and provides a physical environment optimized to promote and accelerate protein folding. GroES binds to the apical surface of the GroEL ring, thereby capping the opening of the GroEL channel. The chain is Co-chaperonin GroES from Cupriavidus taiwanensis (strain DSM 17343 / BCRC 17206 / CCUG 44338 / CIP 107171 / LMG 19424 / R1) (Ralstonia taiwanensis (strain LMG 19424)).